Consider the following 137-residue polypeptide: Large ribosomal subunit protein uL16 (137 aa).

It belongs to the universal ribosomal protein uL16 family. As to quaternary structure, part of the 50S ribosomal subunit.

Functionally, binds 23S rRNA and is also seen to make contacts with the A and possibly P site tRNAs. This Ruegeria pomeroyi (strain ATCC 700808 / DSM 15171 / DSS-3) (Silicibacter pomeroyi) protein is Large ribosomal subunit protein uL16.